The primary structure comprises 304 residues: Ribosomal protein L11 methyltransferase (304 aa).

Residues T152, G173, D195, and N234 each coordinate S-adenosyl-L-methionine.

It belongs to the methyltransferase superfamily. PrmA family.

It is found in the cytoplasm. It catalyses the reaction L-lysyl-[protein] + 3 S-adenosyl-L-methionine = N(6),N(6),N(6)-trimethyl-L-lysyl-[protein] + 3 S-adenosyl-L-homocysteine + 3 H(+). Methylates ribosomal protein L11. The sequence is that of Ribosomal protein L11 methyltransferase from Cupriavidus metallidurans (strain ATCC 43123 / DSM 2839 / NBRC 102507 / CH34) (Ralstonia metallidurans).